The following is a 73-amino-acid chain: MSKDDLIQFTGTVIELAPNATFRVKLENGHVIIAHTAGRMRKNRIRILLGDKVTVEMTPYDLTKGRVILRHQS.

The S1-like domain maps to 1–72 (MSKDDLIQFT…TKGRVILRHQ (72 aa)).

The protein belongs to the IF-1 family. In terms of assembly, component of the 30S ribosomal translation pre-initiation complex which assembles on the 30S ribosome in the order IF-2 and IF-3, IF-1 and N-formylmethionyl-tRNA(fMet); mRNA recruitment can occur at any time during PIC assembly.

The protein resides in the cytoplasm. Its function is as follows. One of the essential components for the initiation of protein synthesis. Stabilizes the binding of IF-2 and IF-3 on the 30S subunit to which N-formylmethionyl-tRNA(fMet) subsequently binds. Helps modulate mRNA selection, yielding the 30S pre-initiation complex (PIC). Upon addition of the 50S ribosomal subunit IF-1, IF-2 and IF-3 are released leaving the mature 70S translation initiation complex. The polypeptide is Translation initiation factor IF-1 (Rickettsia bellii (strain OSU 85-389)).